The primary structure comprises 324 residues: Glyoxylate/hydroxypyruvate reductase B (324 aa).

Residues R237 and E266 contribute to the active site. The Proton donor role is filled by H285.

This sequence belongs to the D-isomer specific 2-hydroxyacid dehydrogenase family. GhrB subfamily. In terms of assembly, homodimer.

The protein localises to the cytoplasm. The enzyme catalyses glycolate + NADP(+) = glyoxylate + NADPH + H(+). It carries out the reaction (R)-glycerate + NAD(+) = 3-hydroxypyruvate + NADH + H(+). It catalyses the reaction (R)-glycerate + NADP(+) = 3-hydroxypyruvate + NADPH + H(+). Its function is as follows. Catalyzes the NADPH-dependent reduction of glyoxylate and hydroxypyruvate into glycolate and glycerate, respectively. The polypeptide is Glyoxylate/hydroxypyruvate reductase B (Shigella flexneri serotype 5b (strain 8401)).